An 838-amino-acid chain; its full sequence is Polyribonucleotide nucleotidyltransferase (838 aa).

Positions 494 and 500 each coordinate Mg(2+). The KH domain maps to 561-620; it reads PRMESMLIDKGKIKNVIGAGGKNVREICEKTGAKIEISQDGTVMIYAVGREAIESAKDMI. One can recognise an S1 motif domain in the interval 630-697; that stretch reads GKIYSGEVCE…DKDHIQLSMR (68 aa). The segment covering 747 to 757 has biased composition (gly residues); it reads GGASAGRNGRG. The interval 747 to 838 is disordered; that stretch reads GGASAGRNGR…PAAPKKPRFF (92 aa). Low complexity predominate over residues 788–810; it reads AGSSGYSSDSSSGNTKSSSSESS. A compositionally biased stretch (gly residues) spans 811–820; sequence GGTGGRGRNG.

This sequence belongs to the polyribonucleotide nucleotidyltransferase family. It depends on Mg(2+) as a cofactor.

Its subcellular location is the cytoplasm. It carries out the reaction RNA(n+1) + phosphate = RNA(n) + a ribonucleoside 5'-diphosphate. Functionally, involved in mRNA degradation. Catalyzes the phosphorolysis of single-stranded polyribonucleotides processively in the 3'- to 5'-direction. In Anaplasma phagocytophilum (strain HZ), this protein is Polyribonucleotide nucleotidyltransferase.